The following is a 430-amino-acid chain: Lipoyl synthase, mitochondrial (430 aa).

The N-terminal 37 residues, 1–37 (MAASTGKLRTLFSAHSSLSARPSSALPALRLTILRSY), are a transit peptide targeting the mitochondrion. A compositionally biased stretch (low complexity) spans 40–56 (TTPPDSSISDPSNSSTT). The tract at residues 40-63 (TTPPDSSISDPSNSSTTVKRPPTA) is disordered. The [4Fe-4S] cluster site is built by cysteine 141, cysteine 146, cysteine 152, cysteine 172, cysteine 176, cysteine 179, and serine 387. The Radical SAM core domain maps to 155 to 376 (GSSKSAATAT…KERALEMGFL (222 aa)).

It belongs to the radical SAM superfamily. Lipoyl synthase family. [4Fe-4S] cluster is required as a cofactor.

It localises to the mitochondrion. The catalysed reaction is [[Fe-S] cluster scaffold protein carrying a second [4Fe-4S](2+) cluster] + N(6)-octanoyl-L-lysyl-[protein] + 2 oxidized [2Fe-2S]-[ferredoxin] + 2 S-adenosyl-L-methionine + 4 H(+) = [[Fe-S] cluster scaffold protein] + N(6)-[(R)-dihydrolipoyl]-L-lysyl-[protein] + 4 Fe(3+) + 2 hydrogen sulfide + 2 5'-deoxyadenosine + 2 L-methionine + 2 reduced [2Fe-2S]-[ferredoxin]. Its pathway is protein modification; protein lipoylation via endogenous pathway; protein N(6)-(lipoyl)lysine from octanoyl-[acyl-carrier-protein]: step 2/2. Catalyzes the radical-mediated insertion of two sulfur atoms into the C-6 and C-8 positions of the octanoyl moiety bound to the lipoyl domains of lipoate-dependent enzymes, thereby converting the octanoylated domains into lipoylated derivatives. This chain is Lipoyl synthase, mitochondrial, found in Ajellomyces dermatitidis (strain ER-3 / ATCC MYA-2586) (Blastomyces dermatitidis).